The sequence spans 120 residues: UPF0102 protein HSM_1206 (120 aa).

It belongs to the UPF0102 family.

The protein is UPF0102 protein HSM_1206 of Histophilus somni (strain 2336) (Haemophilus somnus).